The sequence spans 416 residues: Vacuole membrane protein KMS1 (416 aa).

N-acetylglycine is present on Gly2. The Cytoplasmic segment spans residues 2–60; that stretch reads GSAGVASSSSDVAISALREKHEKEVENLTLTTQPLNTLKLFVEATIQYIKRSISYLLAH. A helical transmembrane segment spans residues 61–81; it reads GGWFILITTLLVVSGGLLVTV. Residues 82-101 are Lumenal-facing; the sequence is DGPHGKHVEEVLEYVRYGLW. Residues 102–124 traverse the membrane as a helical segment; sequence WIALGVASSIGLGSGLHTFVLYL. Residues 125-257 are Cytoplasmic-facing; sequence GPHIALFTLK…WLLTHSQHLN (133 aa). A helical membrane pass occupies residues 258–278; that stretch reads FFTVLVLASVPNPLFDLAGIM. Topologically, residues 279–289 are lumenal; sequence CGQFGIPFWEF. The helical transmembrane segment at 290 to 312 threads the bilayer; the sequence is FLATLIGKAIIKTHIQTIFIICV. Residues 313–323 lie on the Cytoplasmic side of the membrane; sequence CNNQLLDWMEN. The helical transmembrane segment at 324–344 threads the bilayer; that stretch reads ELIWILSHVPGLASMLPGLTA. Residues 345-372 lie on the Lumenal side of the membrane; sequence KLHAMKEKYIDAPSPVPSHIKVKKWDFS. A helical transmembrane segment spans residues 373–393; it reads FASIWNGIVWLMLLNFFVKIV. Residues 394-416 are Cytoplasmic-facing; it reads TATAQRHLKKKQEKEMATLTHSD.

The protein belongs to the VMP1 family.

The protein resides in the endoplasmic reticulum membrane. Functionally, involved in the early secretory pathway. Required for the correct export of secretory products from the endoplasmic reticulum (ER) and involved in the maintenance of ER integrity. In Arabidopsis thaliana (Mouse-ear cress), this protein is Vacuole membrane protein KMS1.